A 313-amino-acid chain; its full sequence is 3-ketodihydrosphingosine reductase TSC10 (313 aa).

NADP(+) is bound at residue Leu-12. Residues Gly-15, Ser-17, and Gly-19 each contribute to the NADPH site. Residues 15–19 (GGSQG) carry the GXSXG motif. Leu-20 contributes to the NADP(+) binding site. Residues Arg-47, Lys-51, and Asp-86 each coordinate NADPH. Asp-86 lines the NADP(+) pocket. The active-site Proton donor is Ser-160. Residues Tyr-174, Lys-178, and Ser-207 each contribute to the NADP(+) site. The Proton acceptor role is filled by Tyr-174. Lys-178 serves as the catalytic Lowers pKa of active site Tyr. The helical transmembrane segment at 278–298 (VFSWILGALLNITIVPIYMLI) threads the bilayer.

Belongs to the short-chain dehydrogenases/reductases (SDR) family.

Its subcellular location is the endoplasmic reticulum membrane. The enzyme catalyses sphinganine + NADP(+) = 3-oxosphinganine + NADPH + H(+). It functions in the pathway lipid metabolism; sphingolipid metabolism. Its function is as follows. Catalyzes the reduction of 3'-oxosphinganine (3-ketodihydrosphingosine/KDS) to sphinganine (dihydrosphingosine/DHS), the second step of de novo sphingolipid biosynthesis. The polypeptide is 3-ketodihydrosphingosine reductase TSC10 (TSC10) (Kluyveromyces lactis (strain ATCC 8585 / CBS 2359 / DSM 70799 / NBRC 1267 / NRRL Y-1140 / WM37) (Yeast)).